A 298-amino-acid chain; its full sequence is Protoheme IX farnesyltransferase (298 aa).

Transmembrane regions (helical) follow at residues 24 to 44, 46 to 66, 97 to 117, 118 to 138, 146 to 166, 172 to 192, 231 to 251, and 278 to 298; these read VVSL…PAWP, WTTI…AAAF, LVFA…VVNP, LTMW…TVLL, IVIG…AATG, ALLL…ALAL, LLPV…VLLG, and IWYL…PIPV.

This sequence belongs to the UbiA prenyltransferase family. Protoheme IX farnesyltransferase subfamily.

The protein localises to the cell inner membrane. It catalyses the reaction heme b + (2E,6E)-farnesyl diphosphate + H2O = Fe(II)-heme o + diphosphate. It participates in porphyrin-containing compound metabolism; heme O biosynthesis; heme O from protoheme: step 1/1. In terms of biological role, converts heme B (protoheme IX) to heme O by substitution of the vinyl group on carbon 2 of heme B porphyrin ring with a hydroxyethyl farnesyl side group. This chain is Protoheme IX farnesyltransferase, found in Thiobacillus denitrificans (strain ATCC 25259 / T1).